The primary structure comprises 338 residues: Ornithine carbamoyltransferase (338 aa).

Carbamoyl phosphate contacts are provided by residues 56-59, Arg-107, and 134-137; these read STRT and HPTQ. Residues Asn-168, Asp-232, and 236-237 contribute to the L-ornithine site; that span reads SM. Carbamoyl phosphate is bound by residues 274–275 and Arg-320; that span reads CL.

This sequence belongs to the aspartate/ornithine carbamoyltransferase superfamily. OTCase family.

The protein resides in the cytoplasm. The catalysed reaction is carbamoyl phosphate + L-ornithine = L-citrulline + phosphate + H(+). It functions in the pathway amino-acid degradation; L-arginine degradation via ADI pathway; carbamoyl phosphate from L-arginine: step 2/2. Functionally, reversibly catalyzes the transfer of the carbamoyl group from carbamoyl phosphate (CP) to the N(epsilon) atom of ornithine (ORN) to produce L-citrulline. This Buchnera aphidicola subsp. Acyrthosiphon pisum (strain 5A) protein is Ornithine carbamoyltransferase.